A 178-amino-acid chain; its full sequence is Stathmin-2-B (178 aa).

Positions 38–178 (DDMEVKQLNK…KNKEQLELSG (141 aa)) constitute an SLD domain. Residues 75–178 (KRKDVSLEEI…KNKEQLELSG (104 aa)) are a coiled coil.

This sequence belongs to the stathmin family. Nervous tissue.

The protein resides in the cytoplasm. It is found in the membrane. It localises to the cell projection. The protein localises to the lamellipodium. The protein is Stathmin-2-B (stmn2-b) of Xenopus laevis (African clawed frog).